Consider the following 568-residue polypeptide: CRISPR-associated exonuclease Cas4/endonuclease Cas1 fusion (568 aa).

Residues 1–209 (MSVVVTRYRG…KCSLAPVCLP (209 aa)) form a CRISPR-associated exonuclease Cas4 region. C43 is a binding site for [4Fe-4S] cluster. The Mn(2+) site is built by D95 and E108. [4Fe-4S] cluster is bound by residues C198, C201, and C207. The CRISPR-associated endonuclease Cas1 stretch occupies residues 232-568 (VLHVATPGTR…PGLFATFRLR (337 aa)). The Mn(2+) site is built by E390, H459, and E474.

In the N-terminal section; belongs to the CRISPR-associated exonuclease Cas4 family. The protein in the C-terminal section; belongs to the CRISPR-associated endonuclease Cas1 family. As to quaternary structure, homodimer, forms a heterotetramer with a Cas2 homodimer. [4Fe-4S] cluster is required as a cofactor. Requires Mg(2+) as cofactor. It depends on Mn(2+) as a cofactor.

It carries out the reaction exonucleolytic cleavage in the 5'- to 3'-direction to yield nucleoside 3'-phosphates.. In terms of biological role, CRISPR (clustered regularly interspaced short palindromic repeat), is an adaptive immune system that provides protection against mobile genetic elements (viruses, transposable elements and conjugative plasmids). CRISPR clusters contain spacers, sequences complementary to antecedent mobile elements, and target invading nucleic acids. CRISPR clusters are transcribed and processed into CRISPR RNA (crRNA). The Cas4 region acts as a ssDNA exonuclease, while the Cas1 region acts as a dsDNA endonuclease. Involved in the integration of spacer DNA into the CRISPR cassette. The polypeptide is CRISPR-associated exonuclease Cas4/endonuclease Cas1 fusion (cas4-cas1) (Myxococcus xanthus (strain DK1622)).